Here is a 294-residue protein sequence, read N- to C-terminus: UPF0761 membrane protein YPK_4186 (294 aa).

Helical transmembrane passes span 44 to 64, 67 to 87, 108 to 128, 136 to 156, 185 to 205, 212 to 232, and 246 to 266; these read LLSL…FPMF, ISIK…GDII, GLIV…NIIW, LVFS…LVGA, VFPL…VPTV, ALIG…GFAM, and VLAV…IVLL.

Belongs to the UPF0761 family.

The protein localises to the cell inner membrane. The chain is UPF0761 membrane protein YPK_4186 from Yersinia pseudotuberculosis serotype O:3 (strain YPIII).